We begin with the raw amino-acid sequence, 113 residues long: Hydrogenase maturation factor HypA (113 aa).

H2 lines the Ni(2+) pocket. Zn(2+) is bound by residues C73, C76, C89, and C92.

This sequence belongs to the HypA/HybF family.

Its function is as follows. Involved in the maturation of [NiFe] hydrogenases. Required for nickel insertion into the metal center of the hydrogenase. In Cereibacter sphaeroides (strain KD131 / KCTC 12085) (Rhodobacter sphaeroides), this protein is Hydrogenase maturation factor HypA.